Reading from the N-terminus, the 907-residue chain is HMG box transcription factor BBX (907 aa).

Residues 1–19 are compositionally biased toward basic and acidic residues; the sequence is MKGSNRNKDHSTEGEGDGK. Disordered regions lie at residues 1 to 24, 37 to 80, 152 to 185, and 220 to 242; these read MKGS…PKRK, LDFS…EQRA, TTNK…PTPK, and TPEA…RQKS. Composition is skewed to acidic residues over residues 39-52 and 61-75; these read FSEE…EEDI and DGLE…DDES. Residues 80–148 constitute a DNA-binding region (HMG box); the sequence is ARRPMNAFLL…AFMKANPGYR (69 aa). Residues 152–164 show a composition bias toward polar residues; it reads TTNKPVKSPTPTV. Ser242 carries the phosphoserine modification. A Glycyl lysine isopeptide (Lys-Gly) (interchain with G-Cter in SUMO2) cross-link involves residue Lys384. Disordered regions lie at residues 435-483, 495-612, and 628-672; these read IIED…DIES, DWGV…SERS, and TSLR…KKFK. Residues 447-457 are compositionally biased toward basic residues; that stretch reads KIKKKKKKNKL. 2 positions are modified to phosphoserine: Ser476 and Ser483. Composition is skewed to basic and acidic residues over residues 496–506 and 534–550; these read WGVDKLGETPR and KKVS…ESRP. Lys571 participates in a covalent cross-link: Glycyl lysine isopeptide (Lys-Gly) (interchain with G-Cter in SUMO2). Over residues 591-612 the composition is skewed to basic and acidic residues; sequence KPEDSDCHRKTETCGSRKSERS. Residues 656–668 are compositionally biased toward polar residues; it reads ESWTFNQSGTSGS. Residue Lys693 forms a Glycyl lysine isopeptide (Lys-Gly) (interchain with G-Cter in SUMO2) linkage. Ser701 is subject to Phosphoserine. 3 disordered regions span residues 708-736, 769-854, and 877-907; these read KCVS…SGDK, NALS…SSTP, and VHRG…CADQ. Residues 723-732 are compositionally biased toward low complexity; sequence SSESTKTSKG. The span at 772 to 783 shows a compositional bias: polar residues; that stretch reads SIPNTPEPTTMQ. Ser789 carries the phosphoserine modification. Positions 790-801 are enriched in basic residues; it reads QKRKARKTKITH. The residue at position 811 (Ser811) is a Phosphoserine.

Its subcellular location is the nucleus. Transcription factor that is necessary for cell cycle progression from G1 to S phase. In Mus musculus (Mouse), this protein is HMG box transcription factor BBX (Bbx).